We begin with the raw amino-acid sequence, 82 residues long: U-scoloptoxin(21)-Sm3a (82 aa).

Residues 1 to 21 form the signal peptide; it reads MKIIALLLMVFLDFIIVNXAE.

Belongs to the scoloptoxin-21 family. As to expression, expressed by the venom gland.

The protein resides in the secreted. This is U-scoloptoxin(21)-Sm3a from Scolopendra morsitans (Tanzanian blue ringleg centipede).